The sequence spans 238 residues: Small ribosomal subunit protein uS2 (238 aa).

It belongs to the universal ribosomal protein uS2 family.

This chain is Small ribosomal subunit protein uS2, found in Chloroflexus aggregans (strain MD-66 / DSM 9485).